The sequence spans 2803 residues: Microtubule-associated protein 1A (2803 aa).

Ser114, Ser117, Ser118, Ser121, and Ser155 each carry phosphoserine. The residue at position 177 (Tyr177) is a Phosphotyrosine. Disordered regions lie at residues 302-466 and 486-516; these read GAVP…DLKP and IDRSRAIRGEKELSSEPQTPPAQKGTVPLPT. Residues Ser319, Ser322, and Ser384 each carry the phosphoserine modification. The span at 335-390 shows a compositional bias: basic and acidic residues; that stretch reads AKREEVVEEGAKEARSELAKELAKTEKKAKESSEKPPEKPAKPERVKTESSEALKA. Basic residues predominate over residues 391–406; it reads EKRKLIKDKVGKKHLK. Composition is skewed to basic and acidic residues over residues 407–464 and 486–499; these read EKIS…KPDL and IDRSRAIRGEKELS. 8 consecutive repeat copies span residues 415-417, 420-422, 427-429, 431-433, 436-438, 440-442, 444-446, and 449-451. The 9 X 3 AA repeats of K-K-[DE] stretch occupies residues 415–541; that stretch reads KKDKEKKEIK…TQDFEEMKRE (127 aa). Thr504 is subject to Phosphothreonine. Phosphoserine is present on residues Ser526 and Ser527. Copy 9 of the repeat occupies 539-541; sequence KRE. Composition is skewed to basic and acidic residues over residues 539 to 554 and 585 to 596; these read KREERALLAEQRDTGL and QEEHVMKEKELV. Disordered regions lie at residues 539-712, 734-806, 847-1080, 1109-1548, and 1573-1605; these read KREE…KAPE, YIQD…GTPE, EDQS…VNID, TGPI…EKKD, and EENHQTQEQESLVQEDKTRKPKMLEEKSPEKVK. Ser605 and Ser612 each carry phosphoserine. Thr616 bears the Phosphothreonine mark. A compositionally biased stretch (basic and acidic residues) spans 623–667; the sequence is WEEKKQREAERLPDRTEAREESEPEVKEDVIEKAELEEMEEVHPS. 3 positions are modified to phosphoserine: Ser644, Ser667, and Ser787. Polar residues-rich tracts occupy residues 847 to 860 and 871 to 883; these read EDQSVASLTAPQTE and TVTSIPSSRTEAT. Residues Ser874, Ser877, Ser878, and Ser891 each carry the phosphoserine modification. Thr894 is modified (phosphothreonine). Phosphoserine occurs at positions 896, 900, 909, 986, 996, 1004, 1013, 1019, and 1029. The span at 1031 to 1065 shows a compositional bias: basic and acidic residues; it reads GDTKRTPGVGKEDAAEETVKPGPEEGTLEKEEKVP. Ser1069, Ser1144, Ser1146, Ser1160, Ser1172, Ser1190, Ser1200, Ser1203, Ser1209, Ser1218, Ser1221, and Ser1264 each carry phosphoserine. The segment covering 1131 to 1146 has biased composition (basic and acidic residues); it reads KPQKDEVLRYPDRSLS. The span at 1154 to 1169 shows a compositional bias: polar residues; the sequence is SVLSVPSPDTANQEPT. Composition is skewed to polar residues over residues 1211-1224 and 1264-1278; these read DVSSKQLSPESLGT and SPPTDGTTRYSAQTD. Positions 1289-1299 are enriched in low complexity; sequence PASSFSHSTPS. 5 positions are modified to phosphoserine: Ser1326, Ser1329, Ser1544, Ser1600, and Ser1626. Composition is skewed to basic and acidic residues over residues 1338 to 1548 and 1586 to 1605; these read IAIK…EKKD and QEDKTRKPKMLEEKSPEKVK. A compositionally biased stretch (basic and acidic residues) spans 1632 to 1642; it reads RAREQEEKYWR. Disordered regions lie at residues 1632–1684, 1713–1879, and 1892–2673; these read RARE…RYWR, DGQG…FSWG, and EGAA…LVNG. Ser1654 bears the Phosphoserine mark. The segment covering 1655-1666 has biased composition (basic and acidic residues); it reads PTREEPAGEQKE. Phosphoserine is present on residues Ser1675, Ser1749, Ser1762, Ser1776, Ser1791, Ser1797, Ser1801, Ser1812, and Ser1818. Residues 1852–1867 show a composition bias toward pro residues; it reads LPPAPLSPAPGPPTPA. Over residues 1907 to 1929 the composition is skewed to basic and acidic residues; it reads KDYRKAEGEREEEGRAEAPDKSS. The residue at position 1931 (Ser1931) is a Phosphoserine. Residues 1951-1964 are compositionally biased toward basic and acidic residues; it reads PEQREPTPYPDERS. At Thr1957 the chain carries Phosphothreonine. The span at 2019 to 2033 shows a compositional bias: polar residues; it reads SPISPKSLQSDTPTF. Residue Ser2022 is modified to Phosphoserine. The segment covering 2042–2066 has biased composition (pro residues); it reads TVPPRPEPGPSMEPSLTPPAVPPRA. Thr2058 is subject to Phosphothreonine. Ser2074, Ser2104, Ser2106, and Ser2108 each carry phosphoserine. A compositionally biased stretch (basic and acidic residues) spans 2086–2122; the sequence is PDRRSPSPKESGRSHWDDSTSDSELEKGAREQPEKEA. Over residues 2175–2184 the composition is skewed to pro residues; sequence PAPPQLPSPA. A phosphoserine mark is found at Ser2235, Ser2252, Ser2256, Ser2259, and Ser2260. Residues 2257 to 2268 show a composition bias toward polar residues; the sequence is EGSSSEATTPVI. Positions 2312–2325 are enriched in low complexity; sequence ASLDLALAPAPSLP. At Ser2449 the chain carries Phosphoserine. Residues 2461–2473 are compositionally biased toward basic and acidic residues; that stretch reads IDDRDLSTEEVRL. The segment covering 2502-2514 has biased composition (low complexity); the sequence is SASDSGSSQSDSD. Over residues 2559-2575 the composition is skewed to pro residues; sequence DPPPLPQPDPRPSPPRP. A compositionally biased stretch (basic and acidic residues) spans 2590 to 2602; the sequence is GRVERLREKEKVQ. Ser2649 and Ser2664 each carry phosphoserine.

It belongs to the MAP1 family. As to quaternary structure, 3 different light chains, LC1 (a cleavage product of MAP1B), LC2 (a cleavage product of MAP1A) and LC3 (produced by one of the MAP1LC3 genes), can associate with the MAP1A or MAP1B heavy chains. Interacts with TIAM2. Interacts with guanylate kinase-like domain of DLG1, DLG2 and DLG4. Binds to CSNK1D. In terms of assembly, interacts with ELAVL4. Phosphorylated by CSNK1D. In terms of processing, LC2 is generated from MAP1A by proteolytic processing. Brain.

The protein resides in the cytoplasm. It is found in the cytoskeleton. Its function is as follows. Structural protein involved in the filamentous cross-bridging between microtubules and other skeletal elements. This Homo sapiens (Human) protein is Microtubule-associated protein 1A (MAP1A).